Consider the following 576-residue polypeptide: Malonate--CoA ligase ACSF3, mitochondrial (576 aa).

The N-terminal 83 residues, 1–83, are a transit peptide targeting the mitochondrion; it reads MLPHVVLTFR…RSLRLSQEIC (83 aa). Residues 202 to 210, Asp-457, Arg-471, and Lys-563 contribute to the ATP site; that span reads TSGTTGRPK.

It belongs to the ATP-dependent AMP-binding enzyme family.

The protein localises to the mitochondrion. The catalysed reaction is tetracosanoate + ATP + CoA = tetracosanoyl-CoA + AMP + diphosphate. It catalyses the reaction malonate + ATP + CoA = malonyl-CoA + AMP + diphosphate. Its function is as follows. Catalyzes the initial reaction in intramitochondrial fatty acid synthesis, by activating malonate and methylmalonate, but not acetate, into their respective CoA thioester. May have some preference toward very-long-chain substrates. This chain is Malonate--CoA ligase ACSF3, mitochondrial, found in Homo sapiens (Human).